The chain runs to 426 residues: UDP-N-acetylglucosamine 1-carboxyvinyltransferase (426 aa).

Lys22–Asn23 contributes to the phosphoenolpyruvate binding site. Arg93 is a UDP-N-acetyl-alpha-D-glucosamine binding site. Cys117 acts as the Proton donor in catalysis. Cys117 is modified (2-(S-cysteinyl)pyruvic acid O-phosphothioketal). UDP-N-acetyl-alpha-D-glucosamine is bound by residues Lys162–Val165, Asp307, and Ile329.

It belongs to the EPSP synthase family. MurA subfamily.

The protein resides in the cytoplasm. The catalysed reaction is phosphoenolpyruvate + UDP-N-acetyl-alpha-D-glucosamine = UDP-N-acetyl-3-O-(1-carboxyvinyl)-alpha-D-glucosamine + phosphate. Its pathway is cell wall biogenesis; peptidoglycan biosynthesis. In terms of biological role, cell wall formation. Adds enolpyruvyl to UDP-N-acetylglucosamine. The sequence is that of UDP-N-acetylglucosamine 1-carboxyvinyltransferase from Haemophilus ducreyi (strain 35000HP / ATCC 700724).